The following is a 1013-amino-acid chain: PHD finger protein 20-like protein 1 (1013 aa).

Residues Ile-11–Pro-71 form the Tudor 1 domain. Glycyl lysine isopeptide (Lys-Gly) (interchain with G-Cter in SUMO2) cross-links involve residues Lys-75 and Lys-79. The 57-residue stretch at Phe-85–Lys-141 folds into the Tudor 2 domain. Disordered regions lie at residues Ala-183–Gly-206, Glu-309–Ser-368, Val-389–Val-454, and Val-482–Pro-511. A compositionally biased stretch (polar residues) spans Lys-315–Lys-346. Ser-368 is modified (phosphoserine). Residues Pro-404–Gln-415 are compositionally biased toward basic residues. Residue Ser-432 is modified to Phosphoserine. Residues Ser-443–Ser-453 show a composition bias toward low complexity. Over residues Glu-496 to Thr-505 the composition is skewed to basic and acidic residues. Residue Lys-530 forms a Glycyl lysine isopeptide (Lys-Gly) (interchain with G-Cter in SUMO2) linkage. Basic and acidic residues predominate over residues Lys-533–Lys-565. The disordered stretch occupies residues Lys-533–Asp-585. Over residues Pro-566–Lys-579 the composition is skewed to basic residues. Residues Ile-681–Pro-729 form a PHD-type zinc finger. The segment covering Arg-824–Glu-852 has biased composition (basic and acidic residues). Residues Arg-824–Glu-911 form a disordered region. The segment covering Tyr-854 to Gly-878 has biased composition (polar residues). The segment covering Ser-879–Gly-892 has biased composition (acidic residues). N6-acetyllysine is present on Lys-905.

Interacts with methylated DNMT1 (DNMT1K142me1). Interacts with SOX2.

Its subcellular location is the nucleus. In terms of biological role, is a negative regulator of proteasomal degradation of a set of methylated proteins, including DNMT1 and SOX2. Involved in the maintainance of embryonic stem cells pluripotency, through the regulation of SOX2 levels. This Mus musculus (Mouse) protein is PHD finger protein 20-like protein 1 (Phf20l1).